Consider the following 441-residue polypeptide: GPI mannosyltransferase 2 (441 aa).

10 consecutive transmembrane segments (helical) span residues 4–24, 35–55, 115–135, 143–163, 165–185, 199–223, 249–269, 306–326, 361–381, and 418–438; these read MTVLSPSAGSQSACSLGLILV, ILFGLWKALIFLVIVICPGLG, LLALLASVLVLYRLSVNIFGG, LCFLSAALHIISPAGAFLSAP, GEALFSLLNISGLYLYSSSVL, LLAAAVLISAATAVRSNGILGGVLF, VIVLGGCVIALGMAVPQYIAF, YWVVPNIPLFLLAMPILALLL, LAIIQALLAVLAFTSYHVQII, and VAVQAIMIYGLIHAVLFGSFL.

This sequence belongs to the PIGV family.

Its subcellular location is the endoplasmic reticulum membrane. The protein operates within glycolipid biosynthesis; glycosylphosphatidylinositol-anchor biosynthesis. Functionally, mannosyltransferase involved in glycosylphosphatidylinositol-anchor biosynthesis. Transfers the second mannose to the glycosylphosphatidylinositol during GPI precursor assembly. The sequence is that of GPI mannosyltransferase 2 (gpi18) from Aspergillus fumigatus (strain ATCC MYA-4609 / CBS 101355 / FGSC A1100 / Af293) (Neosartorya fumigata).